The primary structure comprises 382 residues: Pyrimidine monooxygenase RutA (382 aa).

Residues Ile68–Lys69, Asn134, Glu143, Arg159–Tyr160, and Ser209 contribute to the FMN site.

It belongs to the NtaA/SnaA/DszA monooxygenase family. RutA subfamily.

The catalysed reaction is uracil + FMNH2 + NADH + O2 = (Z)-3-ureidoacrylate + FMN + NAD(+) + H2O + H(+). The enzyme catalyses thymine + FMNH2 + NADH + O2 = (Z)-2-methylureidoacrylate + FMN + NAD(+) + H2O + H(+). Its function is as follows. Catalyzes the pyrimidine ring opening between N-3 and C-4 by an unusual flavin hydroperoxide-catalyzed mechanism, adding oxygen atoms in the process to yield ureidoacrylate peracid, that immediately reacts with FMN forming ureidoacrylate and FMN-N(5)-oxide. The FMN-N(5)-oxide reacts spontaneously with NADH to produce FMN. Requires the flavin reductase RutF to regenerate FMN in vivo. The polypeptide is Pyrimidine monooxygenase RutA (Escherichia coli O150:H5 (strain SE15)).